The chain runs to 428 residues: Histidinol dehydrogenase (428 aa).

Positions 234, 256, and 259 each coordinate substrate. Zn(2+) is bound by residues Gln-256 and His-259. Catalysis depends on proton acceptor residues Glu-324 and His-325. Substrate contacts are provided by His-325, Asp-358, Glu-412, and His-417. Asp-358 is a Zn(2+) binding site. His-417 is a Zn(2+) binding site.

The protein belongs to the histidinol dehydrogenase family. Zn(2+) serves as cofactor.

The catalysed reaction is L-histidinol + 2 NAD(+) + H2O = L-histidine + 2 NADH + 3 H(+). It functions in the pathway amino-acid biosynthesis; L-histidine biosynthesis; L-histidine from 5-phospho-alpha-D-ribose 1-diphosphate: step 9/9. In terms of biological role, catalyzes the sequential NAD-dependent oxidations of L-histidinol to L-histidinaldehyde and then to L-histidine. The polypeptide is Histidinol dehydrogenase (Pelagibacter ubique (strain HTCC1062)).